The sequence spans 595 residues: Probable serine/threonine-protein kinase fhkC (595 aa).

The tract at residues 1-84 is disordered; that stretch reads MNSNKEETTA…MTEDNSKEED (84 aa). Residues 18 to 31 are compositionally biased toward low complexity; it reads EEQQQQQQPQQQEQ. The span at 32–49 shows a compositional bias: polar residues; it reads INTTTASTTSNGENTASD. The segment covering 50 to 70 has biased composition (low complexity); the sequence is NNNNSNNNNNNNTNNTNTNNN. An FHA domain is found at 116 to 170; it reads IILGRSKGVCNYTFTSPTVSGKHCKIYRDPTVKSRNVAFVDDTSTNGTFINNEVI. Residues 218–479 form the Protein kinase domain; it reads YDLREVLGTG…IDQALNHPWF (262 aa). Residues 224–232 and K247 contribute to the ATP site; that span reads LGTGNFASV. The Proton acceptor role is filled by D342. T377 carries the phosphothreonine; by autocatalysis modification. The tract at residues 494 to 595 is disordered; that stretch reads KLEFPPPSTN…DEHEQKKVKN (102 aa). The segment covering 508 to 520 has biased composition (polar residues); the sequence is PTPNTTSSNSQLV. The segment covering 530–567 has biased composition (low complexity); sequence DNTTDNNNNNNNNNNNNNNNNNNNTTNNSNNIDNNNGN. Over residues 585-595 the composition is skewed to basic and acidic residues; sequence NDEHEQKKVKN.

It belongs to the protein kinase superfamily. CAMK Ser/Thr protein kinase family. CHK2 subfamily.

It catalyses the reaction L-seryl-[protein] + ATP = O-phospho-L-seryl-[protein] + ADP + H(+). It carries out the reaction L-threonyl-[protein] + ATP = O-phospho-L-threonyl-[protein] + ADP + H(+). The chain is Probable serine/threonine-protein kinase fhkC (fhkC) from Dictyostelium discoideum (Social amoeba).